The primary structure comprises 770 residues: Cullin-1 (770 aa).

Positions Asp-700–Gly-761 constitute a Cullin neddylation domain. Lys-714 is covalently cross-linked (Glycyl lysine isopeptide (Lys-Gly) (interchain with G-Cter in NEDD8)).

Belongs to the cullin family. In terms of assembly, part of a complex that includes culA, fbxA and regA. Formation of this complex is dependent on the MAP kinase erkB. In terms of processing, neddylated; which enhances the ubiquitination activity of SCF.

The protein operates within protein modification; protein ubiquitination. Functionally, probable core component of cullin-based SCF-like E3 ubiquitin-protein ligase complexes which mediate the ubiquitination and subsequent proteasomal degradation of target proteins. The E3 ubiquitin-protein ligase activity of the complex is dependent on the neddylation of the cullin subunit. Required at several stages during development. CulA and fbxA regulate multicellular development by targeting regA for degradation via a pathway that requires erkB function, leading to an increase in cAMP and PKA activity. The sequence is that of Cullin-1 (culA) from Dictyostelium discoideum (Social amoeba).